A 491-amino-acid polypeptide reads, in one-letter code: Cobyric acid synthase (491 aa).

In terms of domain architecture, GATase cobBQ-type spans 258–445 (ALKVAVPVLG…MHGLFGADAF (188 aa)). Cys340 acts as the Nucleophile in catalysis. His437 is a catalytic residue.

Belongs to the CobB/CobQ family. CobQ subfamily.

It participates in cofactor biosynthesis; adenosylcobalamin biosynthesis. Catalyzes amidations at positions B, D, E, and G on adenosylcobyrinic A,C-diamide. NH(2) groups are provided by glutamine, and one molecule of ATP is hydrogenolyzed for each amidation. In Mesorhizobium japonicum (strain LMG 29417 / CECT 9101 / MAFF 303099) (Mesorhizobium loti (strain MAFF 303099)), this protein is Cobyric acid synthase.